The sequence spans 124 residues: Large ribosomal subunit protein bL12 (124 aa).

This sequence belongs to the bacterial ribosomal protein bL12 family. As to quaternary structure, homodimer. Part of the ribosomal stalk of the 50S ribosomal subunit. Forms a multimeric L10(L12)X complex, where L10 forms an elongated spine to which 2 to 4 L12 dimers bind in a sequential fashion. Binds GTP-bound translation factors.

In terms of biological role, forms part of the ribosomal stalk which helps the ribosome interact with GTP-bound translation factors. Is thus essential for accurate translation. The chain is Large ribosomal subunit protein bL12 from Burkholderia mallei (strain NCTC 10247).